A 119-amino-acid polypeptide reads, in one-letter code: Ribosome-binding factor A (119 aa).

It belongs to the RbfA family. As to quaternary structure, monomer. Binds 30S ribosomal subunits, but not 50S ribosomal subunits or 70S ribosomes.

Its subcellular location is the cytoplasm. In terms of biological role, one of several proteins that assist in the late maturation steps of the functional core of the 30S ribosomal subunit. Associates with free 30S ribosomal subunits (but not with 30S subunits that are part of 70S ribosomes or polysomes). Required for efficient processing of 16S rRNA. May interact with the 5'-terminal helix region of 16S rRNA. In Lactococcus lactis subsp. cremoris (strain SK11), this protein is Ribosome-binding factor A.